A 542-amino-acid chain; its full sequence is CTP synthase (542 aa).

Residues 1-266 form an amidoligase domain region; that stretch reads MATNYIFVTG…DDFICQRFHL (266 aa). Position 14 (Ser-14) interacts with CTP. Residue Ser-14 coordinates UTP. ATP contacts are provided by residues 15-20 and Asp-72; that span reads SLGKGI. 2 residues coordinate Mg(2+): Asp-72 and Glu-140. CTP is bound by residues 147 to 149, 187 to 192, and Lys-223; these read DIE and KTKPTQ. UTP-binding positions include 187–192 and Lys-223; that span reads KTKPTQ. 239-241 provides a ligand contact to ATP; sequence KDV. Residues 291 to 542 form the Glutamine amidotransferase type-1 domain; the sequence is VIGMVGKYTE…VKAAKDNQKK (252 aa). Gly-352 contacts L-glutamine. Cys-379 functions as the Nucleophile; for glutamine hydrolysis in the catalytic mechanism. L-glutamine-binding positions include 380–383, Glu-403, and Arg-470; that span reads LGMQ. Catalysis depends on residues His-515 and Glu-517.

Belongs to the CTP synthase family. In terms of assembly, homotetramer.

The catalysed reaction is UTP + L-glutamine + ATP + H2O = CTP + L-glutamate + ADP + phosphate + 2 H(+). It carries out the reaction L-glutamine + H2O = L-glutamate + NH4(+). The enzyme catalyses UTP + NH4(+) + ATP = CTP + ADP + phosphate + 2 H(+). Its pathway is pyrimidine metabolism; CTP biosynthesis via de novo pathway; CTP from UDP: step 2/2. With respect to regulation, allosterically activated by GTP, when glutamine is the substrate; GTP has no effect on the reaction when ammonia is the substrate. The allosteric effector GTP functions by stabilizing the protein conformation that binds the tetrahedral intermediate(s) formed during glutamine hydrolysis. Inhibited by the product CTP, via allosteric rather than competitive inhibition. Functionally, catalyzes the ATP-dependent amination of UTP to CTP with either L-glutamine or ammonia as the source of nitrogen. Regulates intracellular CTP levels through interactions with the four ribonucleotide triphosphates. The protein is CTP synthase of Pasteurella multocida (strain Pm70).